The following is a 322-amino-acid chain: Glucokinase (322 aa).

An ATP-binding site is contributed by Gly-10 to Thr-15.

Belongs to the bacterial glucokinase family.

It localises to the cytoplasm. It catalyses the reaction D-glucose + ATP = D-glucose 6-phosphate + ADP + H(+). The protein is Glucokinase of Hahella chejuensis (strain KCTC 2396).